Consider the following 442-residue polypeptide: 5-methylthioadenosine/S-adenosylhomocysteine deaminase (442 aa).

Residues His-70 and His-72 each coordinate Zn(2+). The substrate site is built by Glu-99 and His-191. His-218 is a binding site for Zn(2+). The substrate site is built by Glu-221 and Asp-306. Asp-306 serves as a coordination point for Zn(2+).

It belongs to the metallo-dependent hydrolases superfamily. MTA/SAH deaminase family. It depends on Zn(2+) as a cofactor.

The catalysed reaction is S-adenosyl-L-homocysteine + H2O + H(+) = S-inosyl-L-homocysteine + NH4(+). It catalyses the reaction S-methyl-5'-thioadenosine + H2O + H(+) = S-methyl-5'-thioinosine + NH4(+). In terms of biological role, catalyzes the deamination of 5-methylthioadenosine and S-adenosyl-L-homocysteine into 5-methylthioinosine and S-inosyl-L-homocysteine, respectively. Is also able to deaminate adenosine. The polypeptide is 5-methylthioadenosine/S-adenosylhomocysteine deaminase (Nitratidesulfovibrio vulgaris (strain DP4) (Desulfovibrio vulgaris)).